The sequence spans 904 residues: Phosphoenolpyruvate carboxylase (904 aa).

Catalysis depends on residues histidine 151 and lysine 570.

It belongs to the PEPCase type 1 family. Mg(2+) serves as cofactor.

It carries out the reaction oxaloacetate + phosphate = phosphoenolpyruvate + hydrogencarbonate. Forms oxaloacetate, a four-carbon dicarboxylic acid source for the tricarboxylic acid cycle. The chain is Phosphoenolpyruvate carboxylase from Xanthomonas campestris pv. campestris (strain ATCC 33913 / DSM 3586 / NCPPB 528 / LMG 568 / P 25).